A 435-amino-acid chain; its full sequence is Trigger factor (435 aa).

In terms of domain architecture, PPIase FKBP-type spans 163–248 (GDYVTFDFKG…IKEIKVKELP (86 aa)).

This sequence belongs to the FKBP-type PPIase family. Tig subfamily.

It is found in the cytoplasm. It catalyses the reaction [protein]-peptidylproline (omega=180) = [protein]-peptidylproline (omega=0). Functionally, involved in protein export. Acts as a chaperone by maintaining the newly synthesized protein in an open conformation. Functions as a peptidyl-prolyl cis-trans isomerase. In Geotalea daltonii (strain DSM 22248 / JCM 15807 / FRC-32) (Geobacter daltonii), this protein is Trigger factor.